A 1320-amino-acid polypeptide reads, in one-letter code: Clustered mitochondria protein homolog (1320 aa).

Disordered regions lie at residues 166 to 241 (QQLE…KQKM), 552 to 582 (YGSM…TKSI), and 683 to 708 (LKEK…EDVQ). The segment covering 185–194 (TEDKEEKETI) has biased composition (basic and acidic residues). Residues 202–213 (KKNKHHNKKGNK) are compositionally biased toward basic residues. 3 stretches are compositionally biased toward basic and acidic residues: residues 226-241 (NEEK…KQKM), 565-575 (QQQKEENEENK), and 683-695 (LKEK…KEGI). Positions 379 to 649 (KTNRYDINKG…KATPRDPNYT (271 aa)) constitute a Clu domain. TPR repeat units lie at residues 955–988 (GLDL…YHQV), 997–1030 (GACF…TEKT), 1039–1072 (VQAY…TDLL), 1081–1114 (ASIY…QEFL), and 1123–1156 (STTY…LEKE). Residues 1204-1320 (KADQFKKSQP…SKPNKKSSKN (117 aa)) form a disordered region. The segment covering 1237 to 1247 (KPKKSQSKKSK) has biased composition (basic residues). The span at 1248 to 1311 (STNTTTTTNT…PTSSSAADSS (64 aa)) shows a compositional bias: low complexity.

The protein belongs to the CLU family.

The protein localises to the cytoplasm. In terms of biological role, mRNA-binding protein involved in proper cytoplasmic distribution of mitochondria. In Dictyostelium discoideum (Social amoeba), this protein is Clustered mitochondria protein homolog.